Reading from the N-terminus, the 467-residue chain is Cilia- and flagella-associated protein 97 (467 aa).

4 disordered regions span residues 1–20 (MDRY…FFDS), 76–235 (IAKP…DISP), 336–370 (RQAA…KEQQ), and 412–467 (ALSP…AAWQ). Residues 124–135 (DNYYPDEEDSSE) are compositionally biased toward acidic residues. The span at 162-177 (DFVSTISSSDTEYSDT) shows a compositional bias: polar residues. The segment covering 180–194 (DDGASKSSYQSSKGS) has biased composition (low complexity). Basic and acidic residues predominate over residues 198-216 (SPERKPSRSSMRELRHYAE). The span at 223 to 235 (TDVTPLSTPDISP) shows a compositional bias: polar residues. Positions 310–387 (KKNFSFSNDE…ALLKRLESVK (78 aa)) form a coiled coil. Over residues 421 to 439 (SVSRLSPSVSSGGFSRMSS) the composition is skewed to low complexity.

It belongs to the CFAP97 family.

In Xenopus tropicalis (Western clawed frog), this protein is Cilia- and flagella-associated protein 97.